We begin with the raw amino-acid sequence, 141 residues long: Large ribosomal subunit protein uL22 (141 aa).

A disordered region spans residues 110–141; that stretch reads EEKKTVAKKTTTTKAPAKKTTSTKKATAKKES. The segment covering 117–134 has biased composition (low complexity); that stretch reads KKTTTTKAPAKKTTSTKK.

Belongs to the universal ribosomal protein uL22 family. In terms of assembly, part of the 50S ribosomal subunit.

This protein binds specifically to 23S rRNA; its binding is stimulated by other ribosomal proteins, e.g. L4, L17, and L20. It is important during the early stages of 50S assembly. It makes multiple contacts with different domains of the 23S rRNA in the assembled 50S subunit and ribosome. Its function is as follows. The globular domain of the protein is located near the polypeptide exit tunnel on the outside of the subunit, while an extended beta-hairpin is found that lines the wall of the exit tunnel in the center of the 70S ribosome. The chain is Large ribosomal subunit protein uL22 from Campylobacter jejuni subsp. doylei (strain ATCC BAA-1458 / RM4099 / 269.97).